The sequence spans 510 residues: Cytochrome P450 monooxygenase penQ (510 aa).

Residues 9 to 26 form a helical membrane-spanning segment; it reads WIVTLIVAATTYCTLRWV. Residues asparagine 148 and asparagine 341 are each glycosylated (N-linked (GlcNAc...) asparagine). Heme is bound at residue cysteine 448. Asparagine 482 is a glycosylation site (N-linked (GlcNAc...) asparagine).

It belongs to the cytochrome P450 family. Heme is required as a cofactor.

It localises to the membrane. The protein operates within secondary metabolite biosynthesis. In terms of biological role, cytochrome P450 monooxygenase; part of the gene cluster that mediates the biosynthesis of the indole diterpenes penitrems. The geranylgeranyl diphosphate (GGPP) synthase penG catalyzes the first step in penitrem biosynthesis via conversion of farnesyl pyrophosphate and isopentyl pyrophosphate into geranylgeranyl pyrophosphate (GGPP). Condensation of indole-3-glycerol phosphate with GGPP by the prenyl transferase penC then forms 3-geranylgeranylindole (3-GGI). Epoxidation by the FAD-dependent monooxygenase penM leads to a epoxidized-GGI that is substrate of the terpene cyclase penB for cyclization to yield paspaline. Paspaline is subsequently converted to 13-desoxypaxilline by the cytochrome P450 monooxygenase penP, the latter being then converted to paxilline by the cytochrome P450 monooxygenase penQ. Paxilline is converted to beta-paxitriol via C-10 ketoreduction by the short-chain dehydrogenase PC-15 which can be monoprenylated at the C-20 by the indole diterpene prenyltransferase penD. A two-step elimination (acetylation and elimination) process performed by the O-acetyltransferase PC-16 and the P.simplicissimum ptmI-ortholog not yet identified in P.crustosum, leads to the production of the prenylated form of penijanthine. The FAD-linked oxidoreductase ptmO then converts the prenylated form of penijanthine into PC-M5 which is in turn transformed into PC-M4 by the aromatic dimethylallyltransferase PC-22. A series of oxidation steps involving 4 cytochrome P450 monooxygenases (PC-21, PC-05, PC-23, PC-20) and a FAD-dependent monooxygenase (PC-14) are required for the transformation of PC-M4 to penitrems A and E. Synthesis of these final products is proposed to proceed via penitrems D and C (PC-21, PC-05, PC-14) and penitrems B and F (PC-21, PC-05, PC-14, PC-23). The sequence is that of Cytochrome P450 monooxygenase penQ from Penicillium crustosum (Blue mold fungus).